The following is a 1383-amino-acid chain: DNA-directed RNA polymerase subunit beta (1383 aa).

The protein belongs to the RNA polymerase beta chain family. In terms of assembly, the RNAP catalytic core consists of 2 alpha, 1 beta, 1 beta' and 1 omega subunit. When a sigma factor is associated with the core the holoenzyme is formed, which can initiate transcription.

It carries out the reaction RNA(n) + a ribonucleoside 5'-triphosphate = RNA(n+1) + diphosphate. Functionally, DNA-dependent RNA polymerase catalyzes the transcription of DNA into RNA using the four ribonucleoside triphosphates as substrates. This Bartonella bacilliformis (strain ATCC 35685 / KC583 / Herrer 020/F12,63) protein is DNA-directed RNA polymerase subunit beta.